Consider the following 507-residue polypeptide: MEDIQPTVELKSTEEQPLPTESPDALNDYSLPKPHEIENVDSREAPANEDEDAGEDSMKVKDEYSDRDENIMKPEPMGDAEESEMPYSYAREYSDYESIKLERHVPYDNSRPTGGKMNCDVCGLSCISFNVLMVHKRSHTGERPFQCNQCGASFTQKGNLLRHIKLHTGEKPFKCHLCNYACQRRDALTGHLRTHSVEKPYKCEFCGRSYKQRSSLEEHKERCRAFLQNPDLGDAASVEARHIKAEMGSERALVLDRLASNVAKRKSSMPQKFIGEKRHCFDANYNPGYMYEKENEMMQTRMMDQAINNAISYLGAEALRPLVQTPPAPTSEMVPVISSVYPIALTRADMPNGAPQEMEKKRILLPEKILPSERGLSPNNSAQDSTDTDSNHEDRQHLYQQSHVVLPQARNGMPLLKEVPRSFELLKPPPICLRDSIKVINKEGEVMDVFRCDHCHVLFLDYVMFTIHMGCHGFRDPFECNMCGYRSHDRYEFSSHIARGEHRAMLK.

Positions 1–85 are disordered; that stretch reads MEDIQPTVEL…PMGDAEESEM (85 aa). Thr-20 carries the phosphothreonine modification. 2 positions are modified to phosphoserine: Ser-22 and Ser-42. 2 stretches are compositionally biased toward basic and acidic residues: residues 33–46 and 56–72; these read KPHE…REAP and DSMK…ENIM. Residues Lys-61, Lys-73, and Lys-100 each participate in a glycyl lysine isopeptide (Lys-Gly) (interchain with G-Cter in SUMO2) cross-link. 3 consecutive C2H2-type zinc fingers follow at residues 117-139, 145-167, and 173-195; these read MNCD…KRSH, FQCN…IKLH, and FKCH…LRTH. The C2H2-type 4; atypical zinc-finger motif lies at 201–223; sequence YKCEFCGRSYKQRSSLEEHKERC. Lys-244 is covalently cross-linked (Glycyl lysine isopeptide (Lys-Gly) (interchain with G-Cter in SUMO2)). Phosphothreonine is present on Thr-325. A disordered region spans residues 370–396; it reads LPSERGLSPNNSAQDSTDTDSNHEDRQ. Ser-377 carries the phosphoserine modification. A C2H2-type 5 zinc finger spans residues 450 to 472; it reads FRCDHCHVLFLDYVMFTIHMGCH. The mediates homodimerization and heterodimerization stretch occupies residues 450–502; sequence FRCDHCHVLFLDYVMFTIHMGCHGFRDPFECNMCGYRSHDRYEFSSHIARGEH. The segment at 478–502 adopts a C2H2-type 6; atypical zinc-finger fold; it reads FECNMCGYRSHDRYEFSSHIARGEH.

Belongs to the Ikaros C2H2-type zinc-finger protein family. Homodimer. Heterodimer with other IKAROS family members. Interacts with IKZF4 and IKZF5. Interacts with HRAS. Interacts with FOXP3; this interaction may be required for silencing target genes and regulating the suppressive activity of FOXP3-positive regulatory T-cells (Treg). Interacts with BCL21L isoform Bcl-X(L); this interaction blocks the anti-apoptotic role of BCL21L. Associates with histone deacetylase complexes containing HDAC1, MTA2 and SIN3A. Interacts with IKZF1. In terms of tissue distribution, expression is restricted to lymphoid tissues. Expressed at highest levels in spleen and at lower levels in the thymus and bone marrow. First detected in more committed lymphoid progenitors and strongly up-regulated as these differentiate into pre-T and pre-B cell precursors.

The protein resides in the nucleus. The protein localises to the cytoplasm. Its function is as follows. Transcription factor that plays an important role in the regulation of lymphocyte differentiation. Binds to GGGAA. Plays an essential role in regulation of B-cell differentiation, proliferation and maturation to an effector state. Involved in regulating BCL2 expression and controlling apoptosis in T-cells in an IL2-dependent manner. The chain is Zinc finger protein Aiolos (Ikzf3) from Mus musculus (Mouse).